The following is a 131-amino-acid chain: Phosphoribosyl-ATP pyrophosphatase 2 (131 aa).

The tract at residues 105-131 is disordered; that stretch reads RIGKPAAPHATRRPVIPQEARAVRKHR.

It belongs to the PRA-PH family.

The protein localises to the cytoplasm. It carries out the reaction 1-(5-phospho-beta-D-ribosyl)-ATP + H2O = 1-(5-phospho-beta-D-ribosyl)-5'-AMP + diphosphate + H(+). Its pathway is amino-acid biosynthesis; L-histidine biosynthesis; L-histidine from 5-phospho-alpha-D-ribose 1-diphosphate: step 2/9. This chain is Phosphoribosyl-ATP pyrophosphatase 2 (hisE2), found in Rhodopseudomonas palustris (strain ATCC BAA-98 / CGA009).